The chain runs to 277 residues: Sulfur carrier protein FdhD (277 aa).

The active-site Cysteine persulfide intermediate is the C121. 260–265 (FCKPGR) serves as a coordination point for Mo-bis(molybdopterin guanine dinucleotide).

Belongs to the FdhD family.

It localises to the cytoplasm. Its function is as follows. Required for formate dehydrogenase (FDH) activity. Acts as a sulfur carrier protein that transfers sulfur from IscS to the molybdenum cofactor prior to its insertion into FDH. The chain is Sulfur carrier protein FdhD from Shigella flexneri serotype 5b (strain 8401).